Here is a 420-residue protein sequence, read N- to C-terminus: Gamma-glutamyl phosphate reductase (420 aa).

It belongs to the gamma-glutamyl phosphate reductase family.

The protein resides in the cytoplasm. It catalyses the reaction L-glutamate 5-semialdehyde + phosphate + NADP(+) = L-glutamyl 5-phosphate + NADPH + H(+). The protein operates within amino-acid biosynthesis; L-proline biosynthesis; L-glutamate 5-semialdehyde from L-glutamate: step 2/2. Functionally, catalyzes the NADPH-dependent reduction of L-glutamate 5-phosphate into L-glutamate 5-semialdehyde and phosphate. The product spontaneously undergoes cyclization to form 1-pyrroline-5-carboxylate. In Neisseria meningitidis serogroup C (strain 053442), this protein is Gamma-glutamyl phosphate reductase.